Here is a 444-residue protein sequence, read N- to C-terminus: Tubulin beta chain (444 aa).

The short motif at 1–4 is the MREI motif element; that stretch reads MREI. GTP contacts are provided by Q11, E69, S138, G142, T143, G144, N204, and N226. E69 lines the Mg(2+) pocket. Positions 421–444 are disordered; that stretch reads EYQQYQDATAEEEEDFNEEAEEEA. The segment covering 429 to 444 has biased composition (acidic residues); it reads TAEEEEDFNEEAEEEA. Position 438 is a 5-glutamyl polyglutamate (E438).

This sequence belongs to the tubulin family. As to quaternary structure, dimer of alpha and beta chains. A typical microtubule is a hollow water-filled tube with an outer diameter of 25 nm and an inner diameter of 15 nM. Alpha-beta heterodimers associate head-to-tail to form protofilaments running lengthwise along the microtubule wall with the beta-tubulin subunit facing the microtubule plus end conferring a structural polarity. Microtubules usually have 13 protofilaments but different protofilament numbers can be found in some organisms and specialized cells. Mg(2+) serves as cofactor. Some glutamate residues at the C-terminus are polyglycylated, resulting in polyglycine chains on the gamma-carboxyl group. Glycylation is mainly limited to tubulin incorporated into axonemes (cilia and flagella) whereas glutamylation is prevalent in neuronal cells, centrioles, axonemes, and the mitotic spindle. Both modifications can coexist on the same protein on adjacent residues, and lowering polyglycylation levels increases polyglutamylation, and reciprocally. The precise function of polyglycylation is still unclear. In terms of processing, some glutamate residues at the C-terminus are polyglutamylated, resulting in polyglutamate chains on the gamma-carboxyl group. Polyglutamylation plays a key role in microtubule severing by spastin (SPAST). SPAST preferentially recognizes and acts on microtubules decorated with short polyglutamate tails: severing activity by SPAST increases as the number of glutamates per tubulin rises from one to eight, but decreases beyond this glutamylation threshold.

Its subcellular location is the cytoplasm. It is found in the cytoskeleton. Tubulin is the major constituent of microtubules, a cylinder consisting of laterally associated linear protofilaments composed of alpha- and beta-tubulin heterodimers. Microtubules grow by the addition of GTP-tubulin dimers to the microtubule end, where a stabilizing cap forms. Below the cap, tubulin dimers are in GDP-bound state, owing to GTPase activity of alpha-tubulin. In Xenopus laevis (African clawed frog), this protein is Tubulin beta chain (tubb).